Consider the following 774-residue polypeptide: MLLGSTNTLRISSHGKEWEGKTLTGMPLGKVNQRVKVPASDSEGAITSKIKEMLSKVGLSVSSYDTAWVAMVPTLDSSKQPLFPKSLNWIMENQQSDGSWGLDLQHPLLIKDSLSSTLACVLALQKWNVGQQLIHKGLDFIQSNIWAAKDEHQHSPIGFDIIFPSMIEYGRDMGLNLSLNQSLVETMLLKRELETKSLKDKPSNLAYVAEGLNRLNDWKEVMKFQRSNGSLFNSPSSTAAALIHLHDGKCFEYLNSLAKQFGNAVPTIYPFDIYARLSIIDTLEKLGIDSYVSEDKERVLDDICRCWMQGSEEIFLDPTCCAMAFRLLRMNGYAISSDALANFDEKEKLLHTKDIKAMLELFKASQLEICEDESALCRIYAWTSNYLKEELVNGEIPDKSLQAEVDHALGHPHASMERKEIKNFIENYNADKVSLLKTSYRFCNANENYLLAFSFRDFNMYQSMHREELDDLERWVKQYGLDKLKYARQTIRSAYFSITSSLFQPNHSDARISWAQNTVLTTVVDDFFDFSGSMEELLNLIELIERWDEHTTIGFKSKEVEILFNALYGSVNDLADKAYIVQGRCVKRDLIDIWIILLKTMLKEAEWARDKNVPGMDEYIENGYISFALGPVILISLYLMEPLSEEVVTSKEYDNLFIHASIIGRLLNDRVTAKREFAQGKLNSVSLQVVGSNGAITEEEAKEEVTRIITSHRRELLRMVVQTEGSIVPKSCKNLFWTMSKLLHLFYMSEDGYSSPTKMLSAINAIVNEPIVLP.

The N-terminal 35 residues, 1 to 35 (MLLGSTNTLRISSHGKEWEGKTLTGMPLGKVNQRV), are a transit peptide targeting the chloroplast. Mg(2+)-binding residues include Asp525, Asp529, Asn668, Asp669, Thr672, and Glu676. The short motif at 525–529 (DDFFD) is the DDXXD motif element.

This sequence belongs to the terpene synthase family. The cofactor is Mg(2+).

The protein localises to the plastid. It localises to the chloroplast. The catalysed reaction is ent-copalyl diphosphate = ent-beyerene + diphosphate. It carries out the reaction ent-copalyl diphosphate = ent-atiserene + diphosphate. The enzyme catalyses ent-copalyl diphosphate = ent-kaur-16-ene + diphosphate. It functions in the pathway secondary metabolite biosynthesis; terpenoid biosynthesis. Functionally, diterpene cyclase involved in the biosynthesis of labdane-related diterpenoids (LRDs) natural products. Catalyzes the cyclization of ent-CDP into ent-beyerene as a major and ent-kaurene and ent-atiserene as minor products. This chain is Ent-beyerene synthase KSL4, chloroplastic, found in Ricinus communis (Castor bean).